The sequence spans 296 residues: Decaprenyl diphosphate synthase (296 aa).

The segment at 1–24 (MARDARKRTSSNFPQLPPAPDDYP) is disordered. Asp-76 is an active-site residue. Mg(2+) is bound at residue Asp-76. Residues 76 to 80 (DGNGR), Trp-81, Arg-89, His-93, 121 to 124 (STEN), Trp-125, Arg-127, Arg-168, Arg-244, and 250 to 252 (RSS) each bind substrate. Asn-124 serves as the catalytic Proton acceptor. Glu-263 lines the Mg(2+) pocket. 292 to 294 (RFG) contributes to the substrate binding site.

Belongs to the UPP synthase family. In terms of assembly, homodimer. Mg(2+) is required as a cofactor. Mn(2+) serves as cofactor.

It is found in the cell membrane. It catalyses the reaction (2Z,6E)-farnesyl diphosphate + 7 isopentenyl diphosphate = (2Z,6Z,10Z,14Z,18Z,22Z,26Z,30Z,34E)-decaprenyl diphosphate + 7 diphosphate. The enzyme catalyses n isopentenyl diphosphate + (2E,6E)-farnesyl diphosphate = a di-trans,poly-cis-polyprenyl diphosphate + n diphosphate. With respect to regulation, activated by dithiothreitol and inhibited by EDTA. Its function is as follows. Catalyzes the sequential condensation of isopentenyl diphosphate (IPP) in the cis configuration with (2Z,6E)-farnesyl diphosphate (Z-FPP or EZ-FPP) generating the 50 carbon product trans,polycis-decaprenyl diphosphate. When (2E,6E)-farnesyl diphosphate (E-FPP or EE-FPP) is used in vitro, both primary products decaprenyl diphosphate and (2E,6E,10E)-geranylgeranyl diphosphate (EEE-GGPP) are synthesized. M.tuberculosis does not synthesize (2E,6E,10Z)-geranylgeranyl diphosphate (EEZ-GGPP) and heptaprenyl diphosphate. Can also accept many different allylic substrates, including E-geranyl diphosphate (E-GPP), neryl diphosphate (NPP), and all-trans-geranyl-geranyl diphosphate. This chain is Decaprenyl diphosphate synthase (uppS), found in Mycobacterium tuberculosis (strain ATCC 25618 / H37Rv).